Consider the following 326-residue polypeptide: Vomeronasal type-1 receptor 100 (326 aa).

The Extracellular segment spans residues 1-32; it reads MSEFPFFSPQPLFSYMMNKNSRVHTDSNIRNT. Residues 33-53 traverse the membrane as a helical segment; that stretch reads FFTEIGIGILANSFLLLFHIF. The Cytoplasmic segment spans residues 54–70; that stretch reads KFIRGQRSRLTDLPIGL. Residues 71 to 91 traverse the membrane as a helical segment; that stretch reads LSLIHLLMLLMGAFIAIDIFI. The Extracellular segment spans residues 92–104; it reads SWRGWDDIICKFL. The cysteines at positions 101 and 188 are disulfide-linked. Residues 105–127 traverse the membrane as a helical segment; the sequence is VYLYRSFRGLSLCTTCMLSVLQA. Residues 128-149 are Cytoplasmic-facing; it reads ITLSPRSSCLAKFKHKSPHHVS. The chain crosses the membrane as a helical span at residues 150 to 170; sequence CAIISLSILYMFISSHLLVSI. The Extracellular portion of the chain corresponds to 171–209; sequence NATPNLTTNNFMQVTQSCYIIPLSYLMQSMFSTLLAIRD. N-linked (GlcNAc...) asparagine glycosylation occurs at Asn-175. A helical membrane pass occupies residues 210–230; that stretch reads ISLISLMVLSTCYMVVLLCRH. Residues 231-254 are Cytoplasmic-facing; that stretch reads RNQIQHLQGTNLSPKASPEQRATQ. The chain crosses the membrane as a helical span at residues 255 to 275; sequence TILMLMTFFVLMSIFDSIVSC. At 276-285 the chain is on the extracellular side; it reads SRTMYLNDPT. Residues 286 to 306 traverse the membrane as a helical segment; that stretch reads SYYIQIFVVYIYATVSPFVFM. The Cytoplasmic portion of the chain corresponds to 307 to 326; that stretch reads STEKHIVNFLKSMCVRVKNV.

This sequence belongs to the G-protein coupled receptor 1 family. Expressed in 1-4% of neurons of the vomeronasal organ. Only one pheromone receptor gene may be expressed in a particular neuron. Not expressed in the main olfactory epithelium.

The protein resides in the cell membrane. In terms of biological role, putative pheromone receptor implicated in the regulation of social as well as reproductive behavior. In Rattus norvegicus (Rat), this protein is Vomeronasal type-1 receptor 100 (Vom1r100).